Here is a 348-residue protein sequence, read N- to C-terminus: Phosphate acyltransferase (348 aa).

Belongs to the PlsX family. In terms of assembly, homodimer. Probably interacts with PlsY.

It localises to the cytoplasm. The catalysed reaction is a fatty acyl-[ACP] + phosphate = an acyl phosphate + holo-[ACP]. It participates in lipid metabolism; phospholipid metabolism. Catalyzes the reversible formation of acyl-phosphate (acyl-PO(4)) from acyl-[acyl-carrier-protein] (acyl-ACP). This enzyme utilizes acyl-ACP as fatty acyl donor, but not acyl-CoA. This chain is Phosphate acyltransferase, found in Oenococcus oeni (strain ATCC BAA-331 / PSU-1).